The following is a 600-amino-acid chain: RNA-binding protein 47 (600 aa).

Positions 1-25 (MTAEDSASAVAMSNPSPSSSSKSSS) are enriched in low complexity. Positions 1–37 (MTAEDSASAVAMSNPSPSSSSKSSSGHPQHHCTVPEG) are disordered. 3 consecutive RRM domains span residues 82–160 (CEIF…SSVD), 162–244 (CRLF…WAEP), and 257–329 (KILY…LAKP).

It belongs to the RRM RBM47 family. In terms of assembly, homodimer. May interact with MAVS; may regulate MAVS lysosomal degradation.

Its subcellular location is the nucleus. The protein resides in the cytoplasm. In terms of biological role, single-stranded RNA-binding protein that functions in a variety of RNA processes, including alternative splicing, RNA stabilization, and RNA editing. Independently of its RNA-binding activity, could negatively regulate MAVS by promoting its lysosomal degradation. This Danio rerio (Zebrafish) protein is RNA-binding protein 47 (rbm47).